Here is a 111-residue protein sequence, read N- to C-terminus: Nucleoid-associated protein Teth39_2199 (111 aa).

Belongs to the YbaB/EbfC family. As to quaternary structure, homodimer.

Its subcellular location is the cytoplasm. It is found in the nucleoid. Its function is as follows. Binds to DNA and alters its conformation. May be involved in regulation of gene expression, nucleoid organization and DNA protection. In Thermoanaerobacter pseudethanolicus (strain ATCC 33223 / 39E) (Clostridium thermohydrosulfuricum), this protein is Nucleoid-associated protein Teth39_2199.